Consider the following 223-residue polypeptide: F420-dependent NADP reductase (223 aa).

NADP(+) contacts are provided by residues 9-12 (TGDQ), 30-31 (SR), Lys35, Leu75, and Val101.

Belongs to the F420-dependent NADP reductase family.

The enzyme catalyses reduced coenzyme F420-(gamma-L-Glu)(n) + NADP(+) = oxidized coenzyme F420-(gamma-L-Glu)(n) + NADPH + 2 H(+). Its function is as follows. Catalyzes the reduction of NADP(+) with F420H(2) via hydride transfer, and the reverse reaction, i.e. the reduction of F420 with NADPH. Probably functions in the regeneration of NADPH required in biosynthetic reactions. This Methanocaldococcus jannaschii (strain ATCC 43067 / DSM 2661 / JAL-1 / JCM 10045 / NBRC 100440) (Methanococcus jannaschii) protein is F420-dependent NADP reductase (fno).